Reading from the N-terminus, the 162-residue chain is Ciliary microtubule inner protein 5 (162 aa).

Residues M1–G44 form a disordered region.

The protein resides in the cell projection. Its subcellular location is the cilium. This chain is Ciliary microtubule inner protein 5, found in Homo sapiens (Human).